The chain runs to 602 residues: Elongation factor 4 (602 aa).

Residues 7–189 enclose the tr-type G domain; it reads KYIRNFSIVA…AIVNKVPAPD (183 aa). GTP contacts are provided by residues 19-24 and 136-139; these read DHGKST and NKID.

This sequence belongs to the TRAFAC class translation factor GTPase superfamily. Classic translation factor GTPase family. LepA subfamily.

Its subcellular location is the cell membrane. It catalyses the reaction GTP + H2O = GDP + phosphate + H(+). Required for accurate and efficient protein synthesis under certain stress conditions. May act as a fidelity factor of the translation reaction, by catalyzing a one-codon backward translocation of tRNAs on improperly translocated ribosomes. Back-translocation proceeds from a post-translocation (POST) complex to a pre-translocation (PRE) complex, thus giving elongation factor G a second chance to translocate the tRNAs correctly. Binds to ribosomes in a GTP-dependent manner. The sequence is that of Elongation factor 4 from Clostridium botulinum (strain 657 / Type Ba4).